The following is a 482-amino-acid chain: Putative metallophosphoesterase F40B5.2 (482 aa).

Helical transmembrane passes span 15 to 35 (MNLK…SIAI), 129 to 149 (ALMM…YIFL), 156 to 176 (IAIT…FLLI), and 205 to 225 (CYHI…GLYT). A divalent metal cation is bound by residues Asp-256, His-258, Asp-288, Asn-319, His-421, and His-423.

The protein belongs to the metallophosphoesterase superfamily. LOC643853 family.

It localises to the membrane. The protein is Putative metallophosphoesterase F40B5.2 of Caenorhabditis elegans.